The primary structure comprises 460 residues: Bifunctional protein GlmU (460 aa).

Positions 1–230 (MSNNYAIILA…FDESLGVNDR (230 aa)) are pyrophosphorylase. UDP-N-acetyl-alpha-D-glucosamine is bound by residues 9–12 (LAAG), Lys-23, Gln-73, and 78–79 (GT). A Mg(2+)-binding site is contributed by Asp-103. Gly-140, Glu-155, Asn-170, and Asn-228 together coordinate UDP-N-acetyl-alpha-D-glucosamine. Asn-228 contributes to the Mg(2+) binding site. Residues 231–251 (VALATAEAVMRKRINEKHMVN) are linker. Positions 252–460 (GVTFINPDAT…TRFPFHPSQK (209 aa)) are N-acetyltransferase. 2 residues coordinate UDP-N-acetyl-alpha-D-glucosamine: Arg-333 and Lys-351. His-363 functions as the Proton acceptor in the catalytic mechanism. UDP-N-acetyl-alpha-D-glucosamine is bound by residues Tyr-366 and Asn-377. Acetyl-CoA-binding positions include Ala-380, 386–387 (NY), Ser-405, Ala-423, and Arg-440.

The protein in the N-terminal section; belongs to the N-acetylglucosamine-1-phosphate uridyltransferase family. This sequence in the C-terminal section; belongs to the transferase hexapeptide repeat family. Homotrimer. Requires Mg(2+) as cofactor.

It is found in the cytoplasm. The catalysed reaction is alpha-D-glucosamine 1-phosphate + acetyl-CoA = N-acetyl-alpha-D-glucosamine 1-phosphate + CoA + H(+). The enzyme catalyses N-acetyl-alpha-D-glucosamine 1-phosphate + UTP + H(+) = UDP-N-acetyl-alpha-D-glucosamine + diphosphate. Its pathway is nucleotide-sugar biosynthesis; UDP-N-acetyl-alpha-D-glucosamine biosynthesis; N-acetyl-alpha-D-glucosamine 1-phosphate from alpha-D-glucosamine 6-phosphate (route II): step 2/2. It functions in the pathway nucleotide-sugar biosynthesis; UDP-N-acetyl-alpha-D-glucosamine biosynthesis; UDP-N-acetyl-alpha-D-glucosamine from N-acetyl-alpha-D-glucosamine 1-phosphate: step 1/1. It participates in bacterial outer membrane biogenesis; LPS lipid A biosynthesis. In terms of biological role, catalyzes the last two sequential reactions in the de novo biosynthetic pathway for UDP-N-acetylglucosamine (UDP-GlcNAc). The C-terminal domain catalyzes the transfer of acetyl group from acetyl coenzyme A to glucosamine-1-phosphate (GlcN-1-P) to produce N-acetylglucosamine-1-phosphate (GlcNAc-1-P), which is converted into UDP-GlcNAc by the transfer of uridine 5-monophosphate (from uridine 5-triphosphate), a reaction catalyzed by the N-terminal domain. The polypeptide is Bifunctional protein GlmU (Streptococcus suis (strain 98HAH33)).